Reading from the N-terminus, the 178-residue chain is Protein modigliani (178 aa).

Probably homodimerizes. Component of the MTV complex, composed of moi/modigliani, tea and ver/verrocchio. Interacts with ver/verrochio and tea (via C-terminus); the interactions are direct and require fully intact moi/modigliani and ver/verrocchio. The MTV complex is recruited to telomeres by the HipHop-HOAP complex, consisting of HipHop, cav/HOAP and Su(var)205/HP1 to form the terminin telomere-capping complex. Interacts with cav/HOAP and Su(var)205/HP1; the interactions are direct. Probably interacts with peo (via N-terminus and UBC domain).

It localises to the nucleus. Its subcellular location is the chromosome. The protein localises to the telomere. In terms of biological role, part of the MTV complex that associates with the HipHop-HOAP complex to form the terminin telomere-capping complex involved in telomere maintenance and prevention of telomere fusion. Potentially functions downstream of mei-41/ATR. As part of the MTV complex binds single stranded DNA in a sequence-independent manner, protecting it from degradation. The polypeptide is Protein modigliani (Drosophila melanogaster (Fruit fly)).